The primary structure comprises 179 residues: Large ribosomal subunit protein uL5 (179 aa).

This sequence belongs to the universal ribosomal protein uL5 family. Part of the 50S ribosomal subunit; part of the 5S rRNA/L5/L18/L25 subcomplex. Contacts the 5S rRNA and the P site tRNA. Forms a bridge to the 30S subunit in the 70S ribosome.

Functionally, this is one of the proteins that bind and probably mediate the attachment of the 5S RNA into the large ribosomal subunit, where it forms part of the central protuberance. In the 70S ribosome it contacts protein S13 of the 30S subunit (bridge B1b), connecting the 2 subunits; this bridge is implicated in subunit movement. Contacts the P site tRNA; the 5S rRNA and some of its associated proteins might help stabilize positioning of ribosome-bound tRNAs. This is Large ribosomal subunit protein uL5 from Halorhodospira halophila (strain DSM 244 / SL1) (Ectothiorhodospira halophila (strain DSM 244 / SL1)).